The chain runs to 224 residues: MPSYIRDHRKRLRERFMTGGAAALPDYELLELVLFRSIPRQDVKPLARLLLDTFGDFNRVLTAPVERLAEVKGVGEAVITDLKILEASAHRMARARVMQRQVISSWDALLDYCHTTMAHRETEQFRVFYLDRKNVLIADEEQARGTVDHVPVYPREVAKRALELNASALILVHNHPSGDPTPSQSDIDMTARIRSACEALGLTLHDHLIIGKSVELSFRAEGYL.

The MPN domain maps to 102–224 (VISSWDALLD…ELSFRAEGYL (123 aa)). Zn(2+) is bound by residues His-173, His-175, and Asp-186. The JAMM motif signature appears at 173-186 (HNHPSGDPTPSQSD).

It belongs to the UPF0758 family.

This is UPF0758 protein SPO0054 from Ruegeria pomeroyi (strain ATCC 700808 / DSM 15171 / DSS-3) (Silicibacter pomeroyi).